We begin with the raw amino-acid sequence, 370 residues long: Gametogenetin-binding protein 1 (370 aa).

Disordered stretches follow at residues 26–114 and 240–263; these read VGSK…QTLT and PAAP…EEAV. Residues 31 to 49 show a composition bias toward polar residues; sequence GSKSTNKPLTRSQPSSSWE. The tract at residues 225–370 is required for induction of mitochondrial fragmentation; the sequence is LYKQLQKSAM…DEMGNWPPPD (146 aa). Over residues 250-260 the composition is skewed to basic and acidic residues; the sequence is GLPHEEKGERE. The tract at residues 298-370 is interaction with GGN; the sequence is KKFRSTDTVG…DEMGNWPPPD (73 aa).

Interacts with CCDC159. Interacts with isoform 1 and isoform 2 of GGN. In terms of tissue distribution, testis-specific. In the testis, expressed only in germ cells and not in somatic cells. Expression starts in late primary spermatocytes in stage X-XII tubules and gradually increases towards step 1-3 spermatids in stage I-III tubules. Expression then declines continuously and disappears after step 7 spermatids in stage VII tubules (at protein level).

It is found in the cytoplasm. The protein resides in the membrane. The protein localises to the golgi apparatus. Its subcellular location is the mitochondrion intermembrane space. Functionally, induces mitochondrial fragmentation, possibly by promoting DNM1L-dependent fission and may play a role in mitochondrial morphogenesis during spermatogenesis. The polypeptide is Gametogenetin-binding protein 1 (Ggnbp1) (Mus musculus (Mouse)).